The primary structure comprises 78 residues: Small ribosomal subunit protein bS18 (78 aa).

This sequence belongs to the bacterial ribosomal protein bS18 family. Part of the 30S ribosomal subunit. Forms a tight heterodimer with protein bS6.

In terms of biological role, binds as a heterodimer with protein bS6 to the central domain of the 16S rRNA, where it helps stabilize the platform of the 30S subunit. This chain is Small ribosomal subunit protein bS18, found in Alkaliphilus oremlandii (strain OhILAs) (Clostridium oremlandii (strain OhILAs)).